We begin with the raw amino-acid sequence, 284 residues long: MSQEISRNWPAPAKLNLFLHINGRRSDGYHELQTLFQFVDCCDQLDFRVTDTPELILHSTMSAVVADSDNLILRAAKSLQQATGFNGGAEIWLDKRLPMGGGLGGGSSDAATTLVALNRLWNTQLSHDELAAIGLKLGADIPVFIHGFAAFAQGVGERLQAVNPAELWYLVIAPDAHVSTAAVFQDPLLPRNTPKLGLDTLLSQPWANDCQELVVSKYPQVAKALGWLLEYAPSRMTGTGACVFGEFSSQQQALAALAKLPSDMQGFVAKGMNISPLIVRLNRP.

Residue Lys14 is part of the active site. 98–108 (PMGGGLGGGSS) contacts ATP. Residue Asp140 is part of the active site.

Belongs to the GHMP kinase family. IspE subfamily.

The enzyme catalyses 4-CDP-2-C-methyl-D-erythritol + ATP = 4-CDP-2-C-methyl-D-erythritol 2-phosphate + ADP + H(+). The protein operates within isoprenoid biosynthesis; isopentenyl diphosphate biosynthesis via DXP pathway; isopentenyl diphosphate from 1-deoxy-D-xylulose 5-phosphate: step 3/6. Catalyzes the phosphorylation of the position 2 hydroxy group of 4-diphosphocytidyl-2C-methyl-D-erythritol. This is 4-diphosphocytidyl-2-C-methyl-D-erythritol kinase from Shewanella oneidensis (strain ATCC 700550 / JCM 31522 / CIP 106686 / LMG 19005 / NCIMB 14063 / MR-1).